The primary structure comprises 467 residues: Keratin, type 1 cytoskeletal 11 (467 aa).

The segment at 1–100 (MSYSSFSIAQ…GGTDFLLGTS (100 aa)) is head. Over residues 12–30 (SRVPSLSGTRSSSSYSLKS) the composition is skewed to low complexity. The interval 12–32 (SRVPSLSGTRSSSSYSLKSDL) is disordered. The interval 101 to 137 (GKEAMQNLNDRLADYLARVRSLEDRNRELEQKIREWY) is coil 1A. An IF rod domain is found at 101–413 (GKEAMQNLND…TLLEGDAGRS (313 aa)). Residues 138-156 (EKQGAGTKRKDFSHYFKII) are linker 1. A coil 1B region spans residues 157-248 (ADLQNQINAG…SHDEDMKALR (92 aa)). The tract at residues 249–268 (SQLGGQVNVEVDAAPAEDLT) is linker 12. The segment at 269–416 (KKLEIIRQRY…EGDAGRSHSS (148 aa)) is coil 2. The interval 409–430 (DAGRSHSSSHLSSTVSKDKVPV) is disordered. The tail stretch occupies residues 417 to 463 (SHLSSTVSKDKVPVSSPNVITKVRTIVEEKINGQVISKKEYEGSPDQ).

It belongs to the intermediate filament family. Heterotetramer of two type I and two type II keratins. As to expression, expressed in the outermost cell layers of skin epidermis (at protein level).

In Protopterus aethiopicus (Marbled lungfish), this protein is Keratin, type 1 cytoskeletal 11.